A 1039-amino-acid polypeptide reads, in one-letter code: Potassium-transporting ATPase alpha chain 2 (1039 aa).

At 1–102 (MHQKTPEIYS…NSLTPPKQTP (102 aa)) the chain is on the cytoplasmic side. The helical transmembrane segment at 103–123 (EIVKFLKQMVGGFSILLWVGA) threads the bilayer. At 124–146 (FLCWIAYGIQYSSDKSASLNNVY) the chain is on the lumenal side. Residues 147–167 (LGCVLGLVVILTGIFAYYQEA) form a helical membrane-spanning segment. Over 168–303 (KSTNIMSSFN…NEKTPIAIEI (136 aa)) the chain is Cytoplasmic. A helical membrane pass occupies residues 304 to 323 (EHFVHIVAGVAVSIGILFFI). Residues 324–335 (IAVSLKYQVLDS) lie on the Lumenal side of the membrane. The chain crosses the membrane as a helical span at residues 336-353 (IIFLIGIIVANVPEGLLA). At 354 to 787 (TVTVTLSLTA…EEGRLIFDNL (434 aa)) the chain is on the cytoplasmic side. Catalysis depends on D391, which acts as the 4-aspartylphosphate intermediate. 2 residues coordinate Mg(2+): D732 and D736. A helical transmembrane segment spans residues 788 to 807 (KKTIAYSLTKNIAELCPFLI). Over 808 to 817 (YIIVGLPLPI) the chain is Lumenal. A helical membrane pass occupies residues 818–838 (GTITILFIDLGTDIIPSIALA). Over 839–858 (YEKAESDIMNRKPRHKNKDR) the chain is Cytoplasmic. A helical transmembrane segment spans residues 859-881 (LVNQPLAVYSYLHIGLMQALGAF). The Lumenal segment spans residues 882–933 (LVYFTVYAQEGFLPRTLINLRVEWEKDYVNDLKDSYGQEWTRYQREYLEWTG). Residues 934-953 (YTAFFVGILVQQIADLIIRK) form a helical membrane-spanning segment. Over 954–967 (TRRNSIFQQGLFRN) the chain is Cytoplasmic. Position 958 is a phosphoserine; by PKA (S958). Residues 968-986 (KVIWVGITSQIIIGLILSY) form a helical membrane-spanning segment. Residues 987-1001 (GLGSVTALSFTMLRA) lie on the Lumenal side of the membrane. A helical membrane pass occupies residues 1002 to 1022 (QYWFVAVPHAILIWVYDEVRK). At 1023 to 1039 (LFIRLYPGSWWDKNMYY) the chain is on the cytoplasmic side.

Belongs to the cation transport ATPase (P-type) (TC 3.A.3) family. Type IIC subfamily. In terms of assembly, the ATPase pump is composed of a catalytic alpha subunit and an auxiliary non-catalytic beta subunit. The alpha subunit pairs with the beta subunit of gastric H(+)/K(+) ATPase ATP4B or the beta subunit of Na(+)/K(+) ATPases ATP1B1 and ATP1B3; this interaction is required for the formation of a functionally active pump and its targeting at the plasma membrane. Expressed in airway epithelial cells (at protein level). Found in skin and kidney. Detected in prostate basal cells (at protein level). Expression is increased in benign prostate hyperplasia and tumor tissues (at protein level).

Its subcellular location is the apical cell membrane. It catalyses the reaction K(+)(out) + ATP + H2O + H(+)(in) = K(+)(in) + ADP + phosphate + 2 H(+)(out). It carries out the reaction K(+)(out) + Na(+)(in) + ATP + H2O = K(+)(in) + Na(+)(out) + ADP + phosphate + H(+). The ATPase activity is regulated by monovalent cations and pH. Up-regulated by K(+) ions in a dose-dependent way. Down-regulated by Na(+) ions. Inhibited by Na(+)/K(+)-ATPase inhibitor ouabain and H(+)/K(+)-ATPase inhibitor SCH-28080 with an intermediate sensitivity to completely resistant Na(+)/K(+)-ATPases and highly sensitive H(+)/K(+)-ATPases. In terms of biological role, the catalytic subunit of a H(+)/K(+) ATPase and/or Na(+)/K(+) ATPase pump which transports K(+) ions in exchange for Na(+) and/or H(+) ions across the apical membrane of epithelial cells. Uses ATP as an energy source to pump K(+) ions into the cell while transporting Na(+) and/or H(+) ions to the extracellular compartment. Involved in the maintenance of electrolyte homeostasis through K(+) ion absorption in kidney and colon. In the airway epithelium, may play a primary role in mucus acidification regulating its viscosity and clearance. The sequence is that of Potassium-transporting ATPase alpha chain 2 from Homo sapiens (Human).